The chain runs to 256 residues: tRNA-cytidine(32) 2-sulfurtransferase (256 aa).

The PP-loop motif motif lies at 35–40; sequence SGGKDS. 3 residues coordinate [4Fe-4S] cluster: Cys110, Cys113, and Cys201.

The protein belongs to the TtcA family. Homodimer. Mg(2+) is required as a cofactor. It depends on [4Fe-4S] cluster as a cofactor.

It is found in the cytoplasm. It carries out the reaction cytidine(32) in tRNA + S-sulfanyl-L-cysteinyl-[cysteine desulfurase] + AH2 + ATP = 2-thiocytidine(32) in tRNA + L-cysteinyl-[cysteine desulfurase] + A + AMP + diphosphate + H(+). It participates in tRNA modification. In terms of biological role, catalyzes the ATP-dependent 2-thiolation of cytidine in position 32 of tRNA, to form 2-thiocytidine (s(2)C32). The sulfur atoms are provided by the cysteine/cysteine desulfurase (IscS) system. In Coxiella burnetii (strain RSA 331 / Henzerling II), this protein is tRNA-cytidine(32) 2-sulfurtransferase.